A 103-amino-acid polypeptide reads, in one-letter code: DNA-directed RNA polymerase subunit omega (103 aa).

The disordered stretch occupies residues 52–103 (EIESGNVTIHPDPEGKREAVRRRIEEEKRRKEEEEKKIKEQIAKEKEDGEKI). A compositionally biased stretch (basic and acidic residues) spans 62–103 (PDPEGKREAVRRRIEEEKRRKEEEEKKIKEQIAKEKEDGEKI).

This sequence belongs to the RNA polymerase subunit omega family. As to quaternary structure, the RNAP catalytic core consists of 2 alpha, 1 beta, 1 beta' and 1 omega subunit. When a sigma factor is associated with the core the holoenzyme is formed, which can initiate transcription.

The enzyme catalyses RNA(n) + a ribonucleoside 5'-triphosphate = RNA(n+1) + diphosphate. Functionally, promotes RNA polymerase assembly. Latches the N- and C-terminal regions of the beta' subunit thereby facilitating its interaction with the beta and alpha subunits. The polypeptide is DNA-directed RNA polymerase subunit omega (Streptococcus pneumoniae serotype 19F (strain G54)).